The sequence spans 204 residues: 8-oxoguanine DNA glycosylase/AP lyase (204 aa).

Residues Lys129 and Asp147 contribute to the active site.

The protein belongs to the type-2 OGG1 family.

The catalysed reaction is 2'-deoxyribonucleotide-(2'-deoxyribose 5'-phosphate)-2'-deoxyribonucleotide-DNA = a 3'-end 2'-deoxyribonucleotide-(2,3-dehydro-2,3-deoxyribose 5'-phosphate)-DNA + a 5'-end 5'-phospho-2'-deoxyribonucleoside-DNA + H(+). Its function is as follows. Catalyzes the excision of an oxidatively damaged form of guanine (7,8-dihydro-8-oxoguanine = 8-oxoG) from DNA. Also cleaves the DNA backbone at apurinic/apyrimidinic sites (AP sites). Prefers oligomers containing 8-oxoG:C, 8-oxoG:T and 8-oxoG:G base pairs, and is less effective on oligomers containing 8-oxoG:A mispairs. This chain is 8-oxoguanine DNA glycosylase/AP lyase, found in Thermoplasma volcanium (strain ATCC 51530 / DSM 4299 / JCM 9571 / NBRC 15438 / GSS1).